A 471-amino-acid polypeptide reads, in one-letter code: ATP synthase subunit beta, chloroplastic (471 aa).

151–158 contributes to the ATP binding site; the sequence is GGAGVGKT.

Belongs to the ATPase alpha/beta chains family. In terms of assembly, F-type ATPases have 2 components, CF(1) - the catalytic core - and CF(0) - the membrane proton channel. CF(1) has five subunits: alpha(3), beta(3), gamma(1), delta(1), epsilon(1). CF(0) has four main subunits: a(1), b(1), b'(1) and c(9-12).

It localises to the plastid. The protein localises to the chloroplast thylakoid membrane. It carries out the reaction ATP + H2O + 4 H(+)(in) = ADP + phosphate + 5 H(+)(out). Produces ATP from ADP in the presence of a proton gradient across the membrane. The catalytic sites are hosted primarily by the beta subunits. The sequence is that of ATP synthase subunit beta, chloroplastic from Rhodomonas salina (Cryptomonas salina).